We begin with the raw amino-acid sequence, 80 residues long: Small ribosomal subunit protein bS18 (80 aa).

This sequence belongs to the bacterial ribosomal protein bS18 family. Part of the 30S ribosomal subunit. Forms a tight heterodimer with protein bS6.

Functionally, binds as a heterodimer with protein bS6 to the central domain of the 16S rRNA, where it helps stabilize the platform of the 30S subunit. This Staphylococcus epidermidis (strain ATCC 35984 / DSM 28319 / BCRC 17069 / CCUG 31568 / BM 3577 / RP62A) protein is Small ribosomal subunit protein bS18.